The primary structure comprises 67 residues: UPF0434 protein Bphy_0537 (67 aa).

This sequence belongs to the UPF0434 family.

The protein is UPF0434 protein Bphy_0537 of Paraburkholderia phymatum (strain DSM 17167 / CIP 108236 / LMG 21445 / STM815) (Burkholderia phymatum).